Reading from the N-terminus, the 124-residue chain is Aspartate 1-decarboxylase (124 aa).

Residue serine 21 is the Schiff-base intermediate with substrate; via pyruvic acid of the active site. Serine 21 is modified (pyruvic acid (Ser)). Threonine 53 serves as a coordination point for substrate. Tyrosine 54 (proton donor) is an active-site residue. Position 69–71 (69–71 (GAA)) interacts with substrate.

The protein belongs to the PanD family. In terms of assembly, heterooctamer of four alpha and four beta subunits. The cofactor is pyruvate. Post-translationally, is synthesized initially as an inactive proenzyme, which is activated by self-cleavage at a specific serine bond to produce a beta-subunit with a hydroxyl group at its C-terminus and an alpha-subunit with a pyruvoyl group at its N-terminus.

The protein localises to the cytoplasm. It carries out the reaction L-aspartate + H(+) = beta-alanine + CO2. The protein operates within cofactor biosynthesis; (R)-pantothenate biosynthesis; beta-alanine from L-aspartate: step 1/1. Catalyzes the pyruvoyl-dependent decarboxylation of aspartate to produce beta-alanine. The chain is Aspartate 1-decarboxylase from Dehalococcoides mccartyi (strain ATCC BAA-2266 / KCTC 15142 / 195) (Dehalococcoides ethenogenes (strain 195)).